The primary structure comprises 121 residues: Large ribosomal subunit protein bL12 (121 aa).

It belongs to the bacterial ribosomal protein bL12 family. In terms of assembly, homodimer. Part of the ribosomal stalk of the 50S ribosomal subunit. Forms a multimeric L10(L12)X complex, where L10 forms an elongated spine to which 2 to 4 L12 dimers bind in a sequential fashion. Binds GTP-bound translation factors.

Its function is as follows. Forms part of the ribosomal stalk which helps the ribosome interact with GTP-bound translation factors. Is thus essential for accurate translation. The protein is Large ribosomal subunit protein bL12 of Streptococcus agalactiae serotype V (strain ATCC BAA-611 / 2603 V/R).